A 565-amino-acid polypeptide reads, in one-letter code: Glycine/sarcosine/dimethylglycine N-methyltransferase (565 aa).

A compositionally biased stretch (basic and acidic residues) spans 1–10 (MTKSVDDLAR). The disordered stretch occupies residues 1-34 (MTKSVDDLARGDQAGDEQDPVHREQQTFGDNPLE). S-adenosyl-L-methionine is bound by residues Y45, W53, R62, A86, D107, 134-135 (DW), and L152. Positions 154, 187, and 226 each coordinate substrate.

Belongs to the class I-like SAM-binding methyltransferase superfamily. Glycine N-methyltransferase family. As to quaternary structure, monomer.

The enzyme catalyses glycine + 2 S-adenosyl-L-methionine = N,N-dimethylglycine + 2 S-adenosyl-L-homocysteine + 2 H(+). It catalyses the reaction sarcosine + 2 S-adenosyl-L-methionine = glycine betaine + 2 S-adenosyl-L-homocysteine + 2 H(+). It carries out the reaction glycine + S-adenosyl-L-methionine = sarcosine + S-adenosyl-L-homocysteine + H(+). The catalysed reaction is sarcosine + S-adenosyl-L-methionine = N,N-dimethylglycine + S-adenosyl-L-homocysteine + H(+). The enzyme catalyses N,N-dimethylglycine + S-adenosyl-L-methionine = glycine betaine + S-adenosyl-L-homocysteine + H(+). Its pathway is amine and polyamine biosynthesis; betaine biosynthesis via glycine pathway; betaine from glycine: step 1/3. The protein operates within amine and polyamine biosynthesis; betaine biosynthesis via glycine pathway; betaine from glycine: step 2/3. It participates in amine and polyamine biosynthesis; betaine biosynthesis via glycine pathway; betaine from glycine: step 3/3. Functionally, catalyzes the methylation of glycine, sarcosine and dimethylglycine to sarcosine, dimethylglycine and betaine, respectively, with S-adenosylmethionine (AdoMet) acting as the methyl donor. Shows low level of activity on glycine when expressed in E.coli. This is Glycine/sarcosine/dimethylglycine N-methyltransferase from Actinopolyspora halophila.